Here is a 76-residue protein sequence, read N- to C-terminus: Spore germination protein-like protein YdzR (76 aa).

The protein belongs to the GerPA/GerPF family.

The sequence is that of Spore germination protein-like protein YdzR (ydzR) from Bacillus subtilis (strain 168).